The following is a 207-amino-acid chain: Transcriptional regulatory protein RcsA (207 aa).

The 66-residue stretch at 131–196 (LTLPTLSLSK…VIYHIVRLTE (66 aa)) folds into the HTH luxR-type domain. Residues 155-174 (TSQISTQMNIKAKTVSSHKG) constitute a DNA-binding region (H-T-H motif).

The protein belongs to the RcsA family.

Component of the Rcs signaling system, which controls transcription of numerous genes. Binds to DNA to regulate expression of genes. This is Transcriptional regulatory protein RcsA from Klebsiella aerogenes (Enterobacter aerogenes).